Reading from the N-terminus, the 337-residue chain is Glucokinase (337 aa).

11-16 (ADIGGT) provides a ligand contact to ATP.

Belongs to the bacterial glucokinase family.

It is found in the cytoplasm. It catalyses the reaction D-glucose + ATP = D-glucose 6-phosphate + ADP + H(+). This is Glucokinase from Xylella fastidiosa (strain M23).